The following is a 242-amino-acid chain: MILLIDAGNTRIKWGVIRGEAWIAEGALIHAEVAALGDIVAAHPGLRRVVGTNVAGADIAAAIAAALRGVGSAPQWIHASAERCGVRNRYDNPAQLGADRWVALIGARALHRAACLVVNAGTATTVDVLAASGDFDGGIILPGEDLMRRALAGNTAQLPFAEGRYVGAPRNTADAIVSGCRNAQAGAIERMFRQIAHLPGARCLLSGGAAPQLEELLGIPFSRVDNLVLKGLAVVAREDAAA.

6 to 13 (DAGNTRIK) provides a ligand contact to ATP. Substrate-binding positions include tyrosine 90 and 97 to 100 (GADR). Aspartate 99 functions as the Proton acceptor in the catalytic mechanism. Threonine 122 serves as a coordination point for ATP. A substrate-binding site is contributed by threonine 172.

The protein belongs to the type III pantothenate kinase family. As to quaternary structure, homodimer. Requires NH4(+) as cofactor. It depends on K(+) as a cofactor.

It localises to the cytoplasm. It catalyses the reaction (R)-pantothenate + ATP = (R)-4'-phosphopantothenate + ADP + H(+). The protein operates within cofactor biosynthesis; coenzyme A biosynthesis; CoA from (R)-pantothenate: step 1/5. Functionally, catalyzes the phosphorylation of pantothenate (Pan), the first step in CoA biosynthesis. In Aromatoleum aromaticum (strain DSM 19018 / LMG 30748 / EbN1) (Azoarcus sp. (strain EbN1)), this protein is Type III pantothenate kinase.